The following is a 223-amino-acid chain: Bone marrow proteoglycan (223 aa).

Residues 1–16 (MKFPLLLALLVGGASA) form the signal peptide. A propeptide spans 17–106 (LHLSSETSDS…TSLMGDSGCK (90 aa)) (acidic). Positions 20 to 81 (SSETSDSKSP…PGDEGAVSGQ (62 aa)) are disordered. The O-linked (GalNAc...) threonine; partial glycan is linked to T23. O-linked (GalNAc...) serine glycosylation occurs at S24. S66 carries O-linked (Xyl...) (chondroitin sulfate) serine glycosylation. The C-type lectin domain maps to 124–223 (SVCRRCYRGT…VKRRPFICSY (100 aa)). Cystine bridges form between C126/C221 and C198/C213.

In terms of processing, nitrated.

It is found in the secreted. Cytotoxin and helminthotoxin. MBP also induces non-cytolytic histamine release from basophils. It is involved in antiparasitic defense mechanisms and immune hypersensitivity reactions. The sequence is that of Bone marrow proteoglycan (Prg2) from Mus musculus (Mouse).